The chain runs to 320 residues: uncharacterized protein (320 aa).

Residues 1-23 form the signal peptide; that stretch reads MKLNLRFPSYFLPVVAASAFLVS. Cys24 carries N-palmitoyl cysteine lipidation. Cys24 carries S-diacylglycerol cysteine lipidation. Residues 160–181 are disordered; it reads KNHEHGHTHKNGETHEHDHDHH.

It localises to the cell membrane. This is an uncharacterized protein from Mycoplasma pneumoniae (strain ATCC 29342 / M129 / Subtype 1) (Mycoplasmoides pneumoniae).